Consider the following 464-residue polypeptide: tRNA modification GTPase MnmE (464 aa).

Arginine 28, glutamate 90, and arginine 129 together coordinate (6S)-5-formyl-5,6,7,8-tetrahydrofolate. In terms of domain architecture, TrmE-type G spans 226 to 385 (GLATAIVGRP…LEEKIAELFF (160 aa)). A K(+)-binding site is contributed by asparagine 236. GTP contacts are provided by residues 236-241 (NVGKSS), 255-261 (TDIAGTT), and 280-283 (DTAG). Serine 240 serves as a coordination point for Mg(2+). K(+)-binding residues include threonine 255, isoleucine 257, and threonine 260. Threonine 261 provides a ligand contact to Mg(2+). Lysine 464 contributes to the (6S)-5-formyl-5,6,7,8-tetrahydrofolate binding site.

The protein belongs to the TRAFAC class TrmE-Era-EngA-EngB-Septin-like GTPase superfamily. TrmE GTPase family. As to quaternary structure, homodimer. Heterotetramer of two MnmE and two MnmG subunits. It depends on K(+) as a cofactor.

The protein resides in the cytoplasm. Exhibits a very high intrinsic GTPase hydrolysis rate. Involved in the addition of a carboxymethylaminomethyl (cmnm) group at the wobble position (U34) of certain tRNAs, forming tRNA-cmnm(5)s(2)U34. The chain is tRNA modification GTPase MnmE from Ligilactobacillus salivarius (strain UCC118) (Lactobacillus salivarius).